The chain runs to 248 residues: Murein peptide amidase A (248 aa).

Positions 3–245 constitute a Peptidase M14 domain; the sequence is RYYSNNQEIT…DAFIALLQHD (243 aa). Residues His-60, Glu-63, and His-168 each coordinate Zn(2+). The active-site Proton donor/acceptor is the Glu-221.

Belongs to the peptidase M14 family. Homodimer. Zn(2+) serves as cofactor.

It is found in the cytoplasm. The enzyme catalyses L-alanyl-gamma-D-glutamyl-meso-2,6-diaminopimelate + H2O = L-alanyl-D-glutamate + meso-2,6-diaminopimelate. Its pathway is cell wall degradation; peptidoglycan degradation. Its function is as follows. Involved in muropeptide degradation. Catalyzes the hydrolysis of the gamma-D-glutamyl-diaminopimelic acid (gamma-D-Glu-Dap) amide bond in the murein tripeptide L-alanyl-gamma-D-glutamyl-meso-diaminopimelic acid, leading to the formation of L-Ala-gamma-D-Glu and Dap. Has weak activity with L-Ala-gamma-D-Glu-L-Lys, MurNAc-tripeptide and gamma-D-Glu-meso-Dap. Cannot hydrolyze murein tetrapeptide. In Vibrio campbellii (strain ATCC BAA-1116), this protein is Murein peptide amidase A.